We begin with the raw amino-acid sequence, 449 residues long: Adenylosuccinate synthetase isozyme 1 B (449 aa).

Residues 34-40 and 62-64 each bind GTP; these read GDEGKGK and GHT. Aspartate 35 (proton acceptor) is an active-site residue. Residues aspartate 35 and glycine 62 each contribute to the Mg(2+) site. Aspartate 35 contributes to the substrate binding site. Residues 35-38, 60-63, threonine 155, arginine 169, asparagine 248, threonine 263, and arginine 327 each bind IMP; these read DEGK and NAGH. The active-site Proton donor is the histidine 63. Position 323–329 (323–329) interacts with substrate; that stretch reads VTTGRKR. GTP-binding positions include arginine 329, 355-357, and 437-440; these read KLD and GVGK.

The protein belongs to the adenylosuccinate synthetase family. As to quaternary structure, homodimer. It depends on Mg(2+) as a cofactor.

Its subcellular location is the cytoplasm. The catalysed reaction is IMP + L-aspartate + GTP = N(6)-(1,2-dicarboxyethyl)-AMP + GDP + phosphate + 2 H(+). It functions in the pathway purine metabolism; AMP biosynthesis via de novo pathway; AMP from IMP: step 1/2. Functionally, component of the purine nucleotide cycle (PNC), which interconverts IMP and AMP to regulate the nucleotide levels in various tissues, and which contributes to glycolysis and ammoniagenesis. Catalyzes the first committed step in the biosynthesis of AMP from IMP. This is Adenylosuccinate synthetase isozyme 1 B (adss1b) from Salmo salar (Atlantic salmon).